A 152-amino-acid polypeptide reads, in one-letter code: Aspartate carbamoyltransferase regulatory chain (152 aa).

Zn(2+)-binding residues include Cys-109, Cys-114, Cys-138, and Cys-141.

This sequence belongs to the PyrI family. As to quaternary structure, contains catalytic and regulatory chains. The cofactor is Zn(2+).

Its function is as follows. Involved in allosteric regulation of aspartate carbamoyltransferase. The sequence is that of Aspartate carbamoyltransferase regulatory chain from Thermoplasma volcanium (strain ATCC 51530 / DSM 4299 / JCM 9571 / NBRC 15438 / GSS1).